The following is a 471-amino-acid chain: Serine/threonine-protein kinase AtPK2/AtPK19 (471 aa).

A disordered region spans residues 1–21 (MVSSQCSVANKNQTGKPFQKH). In terms of domain architecture, Protein kinase spans 140-395 (FEVLKVVGQG…AEEIKKHKWF (256 aa)). ATP-binding positions include 146–154 (VGQGAFGKV) and Lys-169. Residue Asp-263 is the Proton acceptor of the active site. Residues 281-307 (DFGLAKEFEENTRSNSMCGTTEYMAPE) are activation loop. A Phosphoserine; by PDPK1 modification is found at Ser-296. One can recognise an AGC-kinase C-terminal domain in the interval 396-466 (KAINWKKLEA…VRPPHSFLHR (71 aa)). Thr-455 bears the Phosphothreonine; by TOR mark.

It belongs to the protein kinase superfamily. AGC Ser/Thr protein kinase family. S6 kinase subfamily. As to quaternary structure, interacts with TAP46. Binds to MRF1. In terms of processing, undergoes serine-specific autophosphorylation. Phosphorylated at Thr-455 by TOR.

The catalysed reaction is L-seryl-[protein] + ATP = O-phospho-L-seryl-[protein] + ADP + H(+). It carries out the reaction L-threonyl-[protein] + ATP = O-phospho-L-threonyl-[protein] + ADP + H(+). Its activity is regulated as follows. Activated by PDK1. Functionally, downstream effector of TOR signaling pathway. May be involved in adaptation of plant to cold or high-salt conditions. Mediates the phosphorylation of MRFs (e.g. MRF1). The sequence is that of Serine/threonine-protein kinase AtPK2/AtPK19 (ATPK2) from Arabidopsis thaliana (Mouse-ear cress).